The sequence spans 378 residues: Dual-specificity RNA methyltransferase RlmN (378 aa).

Residue E96 is the Proton acceptor of the active site. Residues 102-340 (DNGRGTLCVS…ATVRTTRGDD (239 aa)) form the Radical SAM core domain. A disulfide bridge links C109 with C345. Residues C116, C120, and C123 each contribute to the [4Fe-4S] cluster site. Residues 170–171 (GE), S202, 224–226 (SLH), and N302 each bind S-adenosyl-L-methionine. The active-site S-methylcysteine intermediate is C345.

This sequence belongs to the radical SAM superfamily. RlmN family. [4Fe-4S] cluster is required as a cofactor.

The protein localises to the cytoplasm. The enzyme catalyses adenosine(2503) in 23S rRNA + 2 reduced [2Fe-2S]-[ferredoxin] + 2 S-adenosyl-L-methionine = 2-methyladenosine(2503) in 23S rRNA + 5'-deoxyadenosine + L-methionine + 2 oxidized [2Fe-2S]-[ferredoxin] + S-adenosyl-L-homocysteine. It carries out the reaction adenosine(37) in tRNA + 2 reduced [2Fe-2S]-[ferredoxin] + 2 S-adenosyl-L-methionine = 2-methyladenosine(37) in tRNA + 5'-deoxyadenosine + L-methionine + 2 oxidized [2Fe-2S]-[ferredoxin] + S-adenosyl-L-homocysteine. Specifically methylates position 2 of adenine 2503 in 23S rRNA and position 2 of adenine 37 in tRNAs. m2A2503 modification seems to play a crucial role in the proofreading step occurring at the peptidyl transferase center and thus would serve to optimize ribosomal fidelity. This is Dual-specificity RNA methyltransferase RlmN from Hahella chejuensis (strain KCTC 2396).